The following is a 346-amino-acid chain: NADH-ubiquinone oxidoreductase chain 2 (346 aa).

11 consecutive transmembrane segments (helical) span residues methionine 1–isoleucine 21, histidine 25–serine 45, phenylalanine 60–alanine 80, cysteine 95–phenylalanine 115, leucine 124–methionine 144, leucine 149–glycine 169, isoleucine 178–valine 195, leucine 200–leucine 219, alanine 242–proline 262, glutamate 274–leucine 294, and alanine 326–valine 346.

The protein belongs to the complex I subunit 2 family.

The protein resides in the mitochondrion inner membrane. It carries out the reaction a ubiquinone + NADH + 5 H(+)(in) = a ubiquinol + NAD(+) + 4 H(+)(out). In terms of biological role, core subunit of the mitochondrial membrane respiratory chain NADH dehydrogenase (Complex I) that is believed to belong to the minimal assembly required for catalysis. Complex I functions in the transfer of electrons from NADH to the respiratory chain. The immediate electron acceptor for the enzyme is believed to be ubiquinone. This chain is NADH-ubiquinone oxidoreductase chain 2 (MT-ND2), found in Mareca penelope (Eurasian wigeon).